Reading from the N-terminus, the 160-residue chain is Putative UPF0479 protein YIL177W-A (160 aa).

2 consecutive transmembrane segments (helical) span residues 39 to 59 (IVFC…KVLQ) and 136 to 156 (VPMI…ISQH).

This sequence belongs to the UPF0479 family.

Its subcellular location is the membrane. The protein is Putative UPF0479 protein YIL177W-A of Saccharomyces cerevisiae (strain ATCC 204508 / S288c) (Baker's yeast).